We begin with the raw amino-acid sequence, 380 residues long: Acyl-coenzyme A diphosphatase NUDT19 (380 aa).

The region spanning 8–264 (WKEAATLIVA…KIWIPPPQFY (257 aa)) is the Nudix hydrolase domain. The short motif at 115-136 (SLIPGEVATRICAIRETFEESG) is the Nudix box element. E130 and E134 together coordinate Mg(2+). Positions 378–380 (NKL) match the Microbody targeting signal motif.

It belongs to the Nudix hydrolase family. In terms of assembly, monomer. Requires Mg(2+) as cofactor. The cofactor is Mn(2+).

The protein resides in the peroxisome. The catalysed reaction is an acyl-CoA + H2O = an acyl-4'-phosphopantetheine + adenosine 3',5'-bisphosphate + 2 H(+). The enzyme catalyses CoA + H2O = (R)-4'-phosphopantetheine + adenosine 3',5'-bisphosphate + 2 H(+). It carries out the reaction hexanoyl-CoA + H2O = hexanoyl-4'-phosphopantetheine + adenosine 3',5'-bisphosphate + 2 H(+). It catalyses the reaction octanoyl-CoA + H2O = S-octanoyl-4'-phosphopantetheine + adenosine 3',5'-bisphosphate + 2 H(+). The catalysed reaction is butanoyl-CoA + H2O = S-butanoyl-4'-phosphopantetheine + adenosine 3',5'-bisphosphate + 2 H(+). The enzyme catalyses propanoyl-CoA + H2O = propanoyl-4'-phosphopantetheine + adenosine 3',5'-bisphosphate + 2 H(+). It carries out the reaction malonyl-CoA + H2O = malonyl-4'-phosphopantetheine + adenosine 3',5'-bisphosphate + 2 H(+). It catalyses the reaction succinyl-CoA + H2O = succinyl-4'-phosphopantetheine + adenosine 3',5'-bisphosphate + 2 H(+). The catalysed reaction is choloyl-CoA + H2O = S-choloyl-4'-phosphopantetheine + adenosine 3',5'-bisphosphate + 2 H(+). The enzyme catalyses 4,8-dimethylnonanoyl-CoA + H2O = S-(4,8-dimethylnonanoyl)-4'-phosphopantetheine + adenosine 3',5'-bisphosphate + 2 H(+). It carries out the reaction (9Z,12Z,15Z)-octadecatrienoyl-CoA + H2O = S-(9Z,12Z,15Z-octadecatrienoyl)-4'-phosphopantetheine + adenosine 3',5'-bisphosphate + 2 H(+). It catalyses the reaction (9Z,12Z)-octadecadienoyl-CoA + H2O = S-(9Z,12Z-octadecadienoyl)-4'-phosphopantetheine + adenosine 3',5'-bisphosphate + 2 H(+). The catalysed reaction is (9Z)-hexadecenoyl-CoA + H2O = S-(9Z-hexadecenoyl)-4'-phosphopantetheine + adenosine 3',5'-bisphosphate + 2 H(+). The enzyme catalyses (9Z)-tetradecenoyl-CoA + H2O = S-(9Z-tetradecenoyl)-4'-phosphopantetheine + adenosine 3',5'-bisphosphate + 2 H(+). It carries out the reaction (6Z)-octenoyl-CoA + H2O = S-(6Z-octenoyl)-4'-phosphopantetheine + adenosine 3',5'-bisphosphate + 2 H(+). It catalyses the reaction hexadecanoyl-CoA + H2O = S-hexadecanoyl-4'-phosphopantetheine + adenosine 3',5'-bisphosphate + 2 H(+). The catalysed reaction is tetradecanoyl-CoA + H2O = tetradecanoyl-4'-phosphopantetheine + adenosine 3',5'-bisphosphate + 2 H(+). The enzyme catalyses dodecanoyl-CoA + H2O = S-dodecanoyl-4'-phosphopantetheine + adenosine 3',5'-bisphosphate + 2 H(+). It carries out the reaction a 5'-end CoA-ribonucleoside in mRNA + H2O = a 5'-end phospho-adenosine-phospho-ribonucleoside in mRNA + (R)-4'-phosphopantetheine + 2 H(+). In terms of biological role, fatty acyl-coenzyme A (CoA) diphosphatase that hydrolyzes fatty acyl-CoA to yield acyl-4'-phosphopantetheine and adenosine 3',5'-bisphosphate. Mediates the hydrolysis of a wide range of CoA esters, including choloyl-CoA and branched-chain fatty-acyl-CoA esters and at low substrate concentrations medium and long-chain fatty-acyl-CoA esters are the primary substrates. Highest activity seen with medium-chain acyl-CoA esters and higher rates of activity seen with the unsaturated acyl-CoA esters compared with the saturated esters. Exhibits decapping activity towards dpCoA-capped RNAs in vitro. The polypeptide is Acyl-coenzyme A diphosphatase NUDT19 (nudt19) (Xenopus laevis (African clawed frog)).